The following is a 373-amino-acid chain: P2Y purinoceptor 1 (373 aa).

Topologically, residues 1–51 (MTEVLWPAVPNGTDAAFLAGPGSSWGNSTVASTAAVSSSFKCALTKTGFQF) are extracellular. 2 N-linked (GlcNAc...) asparagine glycosylation sites follow: Asn11 and Asn27. Disulfide bonds link Cys42/Cys296 and Cys124/Cys202. Lys46 is an ADP binding site. The chain crosses the membrane as a helical span at residues 52-74 (YYLPAVYILVFIIGFLGNSVAIW). Residues 75–87 (MFVFHMKPWSGIS) lie on the Cytoplasmic side of the membrane. A helical membrane pass occupies residues 88 to 109 (VYMFNLALADFLYVLTLPALIF). The Extracellular portion of the chain corresponds to 110–125 (YYFNKTDWIFGDAMCK). Asn113 carries an N-linked (GlcNAc...) asparagine glycan. The helical transmembrane segment at 126 to 147 (LQRFIFHVNLYGSILFLTCISA) threads the bilayer. Residues 148 to 166 (HRYSGVVYPLKSLGRLKKK) are Cytoplasmic-facing. A helical transmembrane segment spans residues 167-188 (NAICISVLVWLIVVVAISPILF). Topologically, residues 189–214 (YSGTGVRKNKTITCYDTTSDEYLRSY) are extracellular. Asn197 carries an N-linked (GlcNAc...) asparagine glycan. ADP is bound at residue 203 to 205 (YDT). The chain crosses the membrane as a helical span at residues 215–237 (FIYSMCTTVAMFCVPLVLILGCY). Over 238–260 (GLIVRALIYKDLDNSPLRRKSIY) the chain is Cytoplasmic. The chain crosses the membrane as a helical span at residues 261-284 (LVIIVLTVFAVSYIPFHVMKTMNL). ADP is bound by residues 283-287 (NLRAR), 303-306 (YATY), and Arg310. The Extracellular portion of the chain corresponds to 285–303 (RARLDFQTPAMCAFNDRVY). The chain crosses the membrane as a helical span at residues 304–325 (ATYQVTRGLASLNSCVDPILYF). Residues 326 to 373 (LAGDTFRRRLSRATRKASRRSEANLQSKSEDMTLNILPEFKQNGDTSL) are Cytoplasmic-facing.

The protein belongs to the G-protein coupled receptor 1 family.

It localises to the cell membrane. ATP functions as antagonist and inhibits ADP-induced mobilization of Ca(2+). The P2Y1 receptor-specific antagonists A3P5PS, A3P5P and A2P5P inhibit downstream signaling mediated by mobilization of Ca(2+) from intracellular stores, and platelet shape changes in response to extracellular ADP. Its function is as follows. Receptor for extracellular adenine nucleotides such as ADP. In platelets, binding to ADP leads to mobilization of intracellular calcium ions via activation of phospholipase C, a change in platelet shape, and ultimately platelet aggregation. The polypeptide is P2Y purinoceptor 1 (P2RY1) (Homo sapiens (Human)).